Consider the following 196-residue polypeptide: Thymidylate kinase (196 aa).

Residue 7–14 (GIDGSGKT) participates in ATP binding.

This sequence belongs to the thymidylate kinase family.

It catalyses the reaction dTMP + ATP = dTDP + ADP. In terms of biological role, phosphorylation of dTMP to form dTDP in both de novo and salvage pathways of dTTP synthesis. This chain is Thymidylate kinase, found in Wolbachia pipientis wMel.